The sequence spans 92 residues: Serine rich endogenous peptide 11 (92 aa).

Residues 1-29 (MENNTFSSKSINLLILLLLLCTFLCQTES) form the signal peptide. The tract at residues 50 to 92 (PNTDIGTPSSTSDRGGGGNGRRLMSQMDVGASSSGQGGGRNRH) is disordered. Residues 53 to 62 (DIGTPSSTSD) are compositionally biased toward polar residues. Short sequence motifs (SCOOP motif) lie at residues 53-67 (DIGT…GGGG) and 75-89 (QMDV…GGGR). Short sequence motifs (sxS motif essential for MIK2 binding) lie at residues 59 to 61 (STS) and 81 to 83 (SSS).

It belongs to the serine rich endogenous peptide (SCOOP) phytocytokine family. Interacts with MIK2 (via extracellular leucine-rich repeat domain); this interaction triggers the formation of complex between MIK2 and the BAK1/SERK3 and SERK4 coreceptors, and subsequent BAK1 activation by phosphorylation. In terms of tissue distribution, mostly expressed in seedlings shoots and roots, and, to a lower extent, in leaves.

Its subcellular location is the cell membrane. The protein localises to the secreted. It localises to the extracellular space. It is found in the apoplast. Its function is as follows. Brassicaceae-specific phytocytokine (plant endogenous peptide released into the apoplast) perceived by MIK2 in a BAK1/SERK3 and SERK4 coreceptors-dependent manner, that modulates various physiological and antimicrobial processes including growth prevention and reactive oxygen species (ROS) response regulation. The chain is Serine rich endogenous peptide 11 from Arabidopsis thaliana (Mouse-ear cress).